The primary structure comprises 526 residues: 2-succinyl-5-enolpyruvyl-6-hydroxy-3-cyclohexene-1-carboxylate synthase (526 aa).

Belongs to the TPP enzyme family. MenD subfamily. In terms of assembly, homodimer. Mg(2+) is required as a cofactor. The cofactor is Mn(2+). Requires thiamine diphosphate as cofactor.

It catalyses the reaction isochorismate + 2-oxoglutarate + H(+) = 5-enolpyruvoyl-6-hydroxy-2-succinyl-cyclohex-3-ene-1-carboxylate + CO2. It functions in the pathway quinol/quinone metabolism; 1,4-dihydroxy-2-naphthoate biosynthesis; 1,4-dihydroxy-2-naphthoate from chorismate: step 2/7. It participates in quinol/quinone metabolism; menaquinone biosynthesis. Its function is as follows. Catalyzes the thiamine diphosphate-dependent decarboxylation of 2-oxoglutarate and the subsequent addition of the resulting succinic semialdehyde-thiamine pyrophosphate anion to isochorismate to yield 2-succinyl-5-enolpyruvyl-6-hydroxy-3-cyclohexene-1-carboxylate (SEPHCHC). This chain is 2-succinyl-5-enolpyruvyl-6-hydroxy-3-cyclohexene-1-carboxylate synthase, found in Bdellovibrio bacteriovorus (strain ATCC 15356 / DSM 50701 / NCIMB 9529 / HD100).